Here is a 260-residue protein sequence, read N- to C-terminus: Small ribosomal subunit protein uS2 (260 aa).

Belongs to the universal ribosomal protein uS2 family.

The polypeptide is Small ribosomal subunit protein uS2 (Streptococcus gordonii (strain Challis / ATCC 35105 / BCRC 15272 / CH1 / DL1 / V288)).